The sequence spans 334 residues: Anthranilate phosphoribosyltransferase (334 aa).

Residues G79, 82–83 (GD), S87, 89–92 (NIST), 107–115 (KAGNRSISS), and S119 each bind 5-phospho-alpha-D-ribose 1-diphosphate. G79 provides a ligand contact to anthranilate. S91 provides a ligand contact to Mg(2+). Residue N110 coordinates anthranilate. Residue R165 coordinates anthranilate. Mg(2+)-binding residues include D224 and E225.

It belongs to the anthranilate phosphoribosyltransferase family. In terms of assembly, homodimer. Requires Mg(2+) as cofactor.

The enzyme catalyses N-(5-phospho-beta-D-ribosyl)anthranilate + diphosphate = 5-phospho-alpha-D-ribose 1-diphosphate + anthranilate. It participates in amino-acid biosynthesis; L-tryptophan biosynthesis; L-tryptophan from chorismate: step 2/5. Catalyzes the transfer of the phosphoribosyl group of 5-phosphorylribose-1-pyrophosphate (PRPP) to anthranilate to yield N-(5'-phosphoribosyl)-anthranilate (PRA). The polypeptide is Anthranilate phosphoribosyltransferase (Streptococcus thermophilus (strain ATCC BAA-491 / LMD-9)).